Consider the following 450-residue polypeptide: Probable rhamnogalacturonase E (450 aa).

An N-terminal signal peptide occupies residues M1–A22. Cysteines 43 and 69 form a disulfide. N54, N92, and N131 each carry an N-linked (GlcNAc...) asparagine glycan. The active-site Proton donor is the D222. C224 and C241 are disulfide-bonded. Residues N242 and N257 are each glycosylated (N-linked (GlcNAc...) asparagine). H297 is a catalytic residue. 2 N-linked (GlcNAc...) asparagine glycosylation sites follow: N324 and N329. 2 disulfides stabilise this stretch: C347–C353 and C375–C384.

Belongs to the glycosyl hydrolase 28 family.

The protein localises to the secreted. Its function is as follows. Pectinolytic enzymes consist of four classes of enzymes: pectine lyase, polygalacturonase, pectin methylesterase and rhamnogalacturonase. Hydrolyzes alpha-D-galacturonopyranosyl-(1,2)-alpha-L-rhamnopyranosyl linkages in the backbone of the hairy regions of pectins. The protein is Probable rhamnogalacturonase E (rhgE) of Aspergillus niger.